The following is a 440-amino-acid chain: Chromosome partition protein MukF (440 aa).

A leucine-zipper region spans residues 208–236 (LSETSGTLRELQDTLEAAGDKLQANLLRI).

This sequence belongs to the MukF family. Interacts, and probably forms a ternary complex, with MukE and MukB via its C-terminal region. The complex formation is stimulated by calcium or magnesium. It is required for an interaction between MukE and MukB.

Its subcellular location is the cytoplasm. The protein localises to the nucleoid. Its function is as follows. Involved in chromosome condensation, segregation and cell cycle progression. May participate in facilitating chromosome segregation by condensation DNA from both sides of a centrally located replisome during cell division. Not required for mini-F plasmid partitioning. Probably acts via its interaction with MukB and MukE. Overexpression results in anucleate cells. It has a calcium binding activity. In Escherichia coli (strain ATCC 8739 / DSM 1576 / NBRC 3972 / NCIMB 8545 / WDCM 00012 / Crooks), this protein is Chromosome partition protein MukF.